The chain runs to 150 residues: UPF0336 protein SGR_2883 (150 aa).

Residues 10–116 (RTYPPTPAYE…STIEAVKSLA (107 aa)) form the MaoC-like domain.

It belongs to the UPF0336 family.

In Streptomyces griseus subsp. griseus (strain JCM 4626 / CBS 651.72 / NBRC 13350 / KCC S-0626 / ISP 5235), this protein is UPF0336 protein SGR_2883.